We begin with the raw amino-acid sequence, 313 residues long: D-apiose import binding protein (313 aa).

An N-terminal signal peptide occupies residues 1-26 (MKLTRRLTLAAFASVLALGTAAPAFS). Residues asparagine 39, 115–116 (DR), 162–164 (DTN), arginine 168, asparagine 218, aspartate 243, and glutamine 263 each bind D-apiofuranose.

Belongs to the bacterial solute-binding protein 2 family.

The protein resides in the periplasm. Part of an ABC transporter complex involved in D-apiose import. The chain is D-apiose import binding protein from Rhizobium rhizogenes (strain K84 / ATCC BAA-868) (Agrobacterium radiobacter).